A 279-amino-acid polypeptide reads, in one-letter code: Arabinooligosaccharides transport system permease protein AraQ (279 aa).

6 helical membrane-spanning segments follow: residues 8-28 (ILSWLLTIGFAFIAFIAVFPL), 79-99 (VWISIVIVVLSLLFSSMVGYA), 110-130 (FFFLLVLIILMIPFEILMLPL), 140-160 (VNTYTAVILPAIVAPIAVFFF), 184-204 (GIFFKIMLPLMGPSLAAMAIL), and 245-265 (ILLAGSVMTIVPIVILFIFFQ). The 190-residue stretch at 75–264 (FGNSVWISIV…VPIVILFIFF (190 aa)) folds into the ABC transmembrane type-1 domain.

Belongs to the binding-protein-dependent transport system permease family. MalFG subfamily. The complex is composed of two ATP-binding proteins (MsmX), two transmembrane proteins (AraP and AraQ) and a solute-binding protein (AraN).

It localises to the cell membrane. Its function is as follows. Part of the ABC transporter complex AraNPQ involved in the uptake of arabinooligosaccharides. Responsible for the translocation of the substrate across the membrane. The sequence is that of Arabinooligosaccharides transport system permease protein AraQ (araQ) from Halalkalibacterium halodurans (strain ATCC BAA-125 / DSM 18197 / FERM 7344 / JCM 9153 / C-125) (Bacillus halodurans).